The sequence spans 473 residues: MLQIYNTLSRSKQVFKPIVPGKVKMYVCGMTVYDFCHIGHARVMIVFDMVVRWLRASGYEVQYVRNITDIDDKIIKRALENSEPISALTNRFIAAMHADSDELGLMHPDQEPRATDYIQQMQGMIGKLIENELAYQGEDGDVNFAVRLLPRYGQLSGKTLDELNAGERVAIGGGKRDPLDFVLWKSAKPEEPADTRWNSPWGEGRPGWHIECSAMSCDLLGAHFDIHGGGADLQFPHHENEIAQSEGALYGQNRQENDAPFVNYWMHNGHIRVNEEKMSKSLGNFFLIRDVLKSFDPEVVRFFMLKAHYRSPINYSDAQLEEARSGLTRLYTALTHIPEVDTVPIDLQNPWAKRFADAMNDDFNTPEAIAVLFDLASEVNRAQGAEKQMLAGLLKSLGGTLNFLQRDPTNFLQAGSKDQSGLSSEQIEEHIAARVAAKQAKDFAKADGIRKALLEQGVVLEDKPGGITEWRRA.

Cys28 provides a ligand contact to Zn(2+). The short motif at 30–40 is the 'HIGH' region element; sequence MTVYDFCHIGH. Zn(2+) is bound by residues Cys212, His237, and Glu241. Residues 277-281 carry the 'KMSKS' region motif; it reads KMSKS. Lys280 lines the ATP pocket.

It belongs to the class-I aminoacyl-tRNA synthetase family. As to quaternary structure, monomer. Requires Zn(2+) as cofactor.

Its subcellular location is the cytoplasm. The catalysed reaction is tRNA(Cys) + L-cysteine + ATP = L-cysteinyl-tRNA(Cys) + AMP + diphosphate. This is Cysteine--tRNA ligase from Polynucleobacter asymbioticus (strain DSM 18221 / CIP 109841 / QLW-P1DMWA-1) (Polynucleobacter necessarius subsp. asymbioticus).